A 398-amino-acid polypeptide reads, in one-letter code: MALLRRPTVSSDLENIDTGVNSKVKSHVTIRRTVLEEIGNRVTTRAAQVAKKAQNTKVPVQPTKTTNVNKQLKPTASVKPVQMEKLAPKGPSPTPEDVSMKEENLCQAFSDALLCKIEDIDNEDWENPQLCSDYVKDIYQYLRQLEVLQSINPHFLDGRDINGRMRAILVDWLVQVHSKFRLLQETLYMCVGIMDRFLQVQPVSRKKLQLVGITALLLASKYEEMFSPNIEDFVYITDNAYTSSQIREMETLILKELKFELGRPLPLHFLRRASKAGEVDVEQHTLAKYLMELTLIDYDMVHYHPSKVAAAASCLSQKVLGQGKWNLKQQYYTGYTENEVLEVMQHMAKNVVKVNENLTKFIAIKNKYASSKLLKISMIPQLNSKAVKDLASPLIGRS.

Thr-8 is modified (phosphothreonine). Residues Ser-11, Ser-77, and Ser-92 each carry the phosphoserine modification. Thr-94 carries the post-translational modification Phosphothreonine. 3 positions are modified to phosphoserine: Ser-99, Ser-392, and Ser-398.

It belongs to the cyclin family. Cyclin AB subfamily. Interacts with the CDK1 protein kinase to form a serine/threonine kinase holoenzyme complex also known as maturation promoting factor (MPF). The cyclin subunit imparts substrate specificity to the complex.

Essential for the control of the cell cycle at the G2/M (mitosis) transition. This is G2/mitotic-specific cyclin-B2 (CCNB2) from Homo sapiens (Human).